The sequence spans 378 residues: Transcription initiation factor IIA subunit 1 (378 aa).

The residue at position 2 (Ala-2) is an N-acetylalanine. 3 stretches are compositionally biased toward low complexity: residues 69–79, 89–106, and 247–281; these read QVQQQHQPQQQ, QQAQPQQTVPQQAQTQQV, and PAQAPMPAAGQQQPQAQPAQQQAPLVLQVDGTGDT. Disordered regions lie at residues 69–108 and 247–331; these read QVQQQHQPQQQQHHHHHHQHQQAQPQQTVPQQAQTQQVLI and PAQA…QELF. Residues Ser-282, Ser-283, Ser-318, and Ser-323 each carry the phosphoserine; by TAF1 modification. Residues 282–331 show a composition bias toward acidic residues; sequence SSEEDEDEEEDYDDDEEEDKEKDGAEDGQVEEEPLNSEDDVSDEEGQELF. The DNA site is built by His-345 and Arg-346.

Belongs to the TFIIA subunit 1 family. TFIIA is a heterodimer of the large unprocessed subunit 1 and a small subunit gamma. It was originally believed to be a heterotrimer of an alpha (p35), a beta (p19) and a gamma subunit (p12). TFIIA forms a complex with TBP. Part of TBP-based Pol II pre-initiation complex (PIC), in which Pol II core assembles with general transcription factors and other specific initiation factors including GTF2E1, GTF2E2, GTF2F1, GTF2F2, TCEA1, ERCC2, ERCC3, GTF2H2, GTF2H3, GTF2H4, GTF2H5, GTF2A1, GTF2A2, GTF2B and TBP; this large multi-subunit PIC complex mediates DNA unwinding and targets Pol II core to the transcription start site where the first phosphodiester bond forms. Post-translationally, the alpha and beta subunits are postranslationally produced from the precursor form by TASP1. The cleavage promotes proteasomal degradation. Expressed in pachytene spermatocytes and spermatids.

It localises to the nucleus. TFIIA is a component of the transcription machinery of RNA polymerase II and plays an important role in transcriptional activation. TFIIA in a complex with TBP mediates transcriptional activity. This is Transcription initiation factor IIA subunit 1 (Gtf2a1) from Mus musculus (Mouse).